A 494-amino-acid chain; its full sequence is 4-hydroxyphenylacetate 3-monooxygenase oxygenase component (494 aa).

Residues 103–107 (RSPDY) and His-149 each bind substrate. FAD is bound by residues 149–151 (HTL), 155–158 (QMNR), and Thr-192. 205 to 206 (ST) is a binding site for substrate. Residue 455–458 (DPVR) coordinates FAD.

This sequence belongs to the FADH(2)-utilizing monooxygenase family. As to quaternary structure, 4-HPA 3-monooxygenase consists of a reductase component HpaI and an oxygenase component HpaH.

The catalysed reaction is 4-hydroxyphenylacetate + FADH2 + O2 = 3,4-dihydroxyphenylacetate + FAD + H2O + H(+). Its pathway is aromatic compound metabolism; 4-hydroxyphenylacetate degradation; pyruvate and succinate semialdehyde from 4-hydroxyphenylacetate: step 1/7. Utilizes FADH(2) supplied by HpaI, to catalyze the hydroxylation of 4-hydroxyphenylacetic acid, leading to the production of 3,4-dihydroxyphenylacetic acid (DHPA). The chain is 4-hydroxyphenylacetate 3-monooxygenase oxygenase component (hpaH) from Geobacillus sp. (strain PA-9).